The chain runs to 815 residues: uncharacterized protein (815 aa).

The first 25 residues, 1-25 (MVVMKKKRILIVSAIVLLFLTVASA), serve as a signal peptide directing secretion. The next 6 membrane-spanning stretches (helical) occupy residues 127–147 (FGEA…CVRG), 157–177 (ILFI…GYYM), 311–331 (SFIA…LAFF), 333–353 (FLLQ…FILA), 372–392 (VYLL…TCFI), and 401–421 (GFGM…IGFH). Positions 483–815 (KDGSNADGVT…DRLRRDERTR (333 aa)) are disordered. The span at 513–543 (HAISRTPQKETANGIANHNSRSLKRNPQTLS) shows a compositional bias: polar residues. Composition is skewed to basic and acidic residues over residues 544–563 (KEQE…ENKQ) and 599–614 (QDKK…KEYV). Polar residues predominate over residues 619 to 630 (KQPNNQQQTDDA). Positions 648 to 658 (ENEKDTERTDQ) are enriched in basic and acidic residues. Residues 665 to 678 (EQNQNLETDQQQDF) are compositionally biased toward polar residues. A compositionally biased stretch (basic and acidic residues) spans 696–705 (KTAEIKRSDQ). Polar residues predominate over residues 720 to 732 (SPQSTKVENQPIA). Over residues 734–757 (NERKIRPSEPAKVHSDGIRVDEKQ) the composition is skewed to basic and acidic residues. Polar residues predominate over residues 773–793 (PSSQTIKRTEQSVNSFDQVSL). The segment covering 796 to 815 (IARRSSSKVEDRLRRDERTR) has biased composition (basic and acidic residues).

The protein localises to the cell membrane. This is an uncharacterized protein from Bacillus subtilis (strain 168).